The following is a 531-amino-acid chain: Endoglucanase 7 (531 aa).

The first 27 residues, 1–27 (MRGRALVLVAALLLQLLLLAAAGGAGA), serve as a signal peptide directing secretion. Catalysis depends on Asp89, which acts as the Nucleophile. Catalysis depends on residues His430, Asp482, and Glu491.

It belongs to the glycosyl hydrolase 9 (cellulase E) family. In terms of tissue distribution, ubiquitous.

The protein localises to the secreted. It carries out the reaction Endohydrolysis of (1-&gt;4)-beta-D-glucosidic linkages in cellulose, lichenin and cereal beta-D-glucans.. This is Endoglucanase 7 (GLU10) from Oryza sativa subsp. japonica (Rice).